The following is a 901-amino-acid chain: Protein translocase subunit SecA (901 aa).

Residues Gln-87, 105-109 (GEGKT), and Asp-512 each bind ATP. Positions 853-901 (QMQQLSHQTDENEAAEAIAAQTGDRKVGRNDPCPCGSGKKYKSCHGRLS) are disordered. Residues Cys-885, Cys-887, Cys-896, and His-897 each contribute to the Zn(2+) site. The span at 891–901 (KKYKSCHGRLS) shows a compositional bias: basic residues.

This sequence belongs to the SecA family. As to quaternary structure, monomer and homodimer. Part of the essential Sec protein translocation apparatus which comprises SecA, SecYEG and auxiliary proteins SecDF-YajC and YidC. Zn(2+) serves as cofactor.

Its subcellular location is the cell inner membrane. The protein resides in the cytoplasm. The catalysed reaction is ATP + H2O + cellular proteinSide 1 = ADP + phosphate + cellular proteinSide 2.. Its function is as follows. Part of the Sec protein translocase complex. Interacts with the SecYEG preprotein conducting channel. Has a central role in coupling the hydrolysis of ATP to the transfer of proteins into and across the cell membrane, serving both as a receptor for the preprotein-SecB complex and as an ATP-driven molecular motor driving the stepwise translocation of polypeptide chains across the membrane. The polypeptide is Protein translocase subunit SecA (Enterobacter sp. (strain 638)).